The following is a 60-amino-acid chain: Homeobox protein CHOX-CAD2 (60 aa).

Positions 1–60 (KEKYRVVYTDHQRLELEKEFHCNRYITIRRKSELAVNLGLSERQVKSWFQNRRAKERKII) form a DNA-binding region, homeobox.

Belongs to the Caudal homeobox family.

The protein localises to the nucleus. The chain is Homeobox protein CHOX-CAD2 (CHOX-CAD2) from Gallus gallus (Chicken).